The sequence spans 198 residues: Recombination protein RecR (198 aa).

The segment at 57–72 (CEKCNTFTEAQICEVC) adopts a C4-type zinc-finger fold. The region spanning 80–175 (TLLCVVETPA…AVTRLARGVP (96 aa)) is the Toprim domain.

It belongs to the RecR family.

In terms of biological role, may play a role in DNA repair. It seems to be involved in an RecBC-independent recombinational process of DNA repair. It may act with RecF and RecO. In Burkholderia vietnamiensis (strain G4 / LMG 22486) (Burkholderia cepacia (strain R1808)), this protein is Recombination protein RecR.